Here is a 611-residue protein sequence, read N- to C-terminus: tRNA uridine 5-carboxymethylaminomethyl modification enzyme MnmG (611 aa).

Residues 8–13, Val120, and Ser175 each bind FAD; that span reads GAGHAG. Residue 268-282 participates in NAD(+) binding; that stretch reads GPRYCPSIEDKIVRF. Gln365 lines the FAD pocket.

This sequence belongs to the MnmG family. Homodimer. Heterotetramer of two MnmE and two MnmG subunits. FAD is required as a cofactor.

The protein localises to the cytoplasm. In terms of biological role, NAD-binding protein involved in the addition of a carboxymethylaminomethyl (cmnm) group at the wobble position (U34) of certain tRNAs, forming tRNA-cmnm(5)s(2)U34. The polypeptide is tRNA uridine 5-carboxymethylaminomethyl modification enzyme MnmG (Mycoplasmoides gallisepticum (strain R(low / passage 15 / clone 2)) (Mycoplasma gallisepticum)).